Reading from the N-terminus, the 185-residue chain is Ribosome-recycling factor (185 aa).

The protein belongs to the RRF family.

Its subcellular location is the cytoplasm. Functionally, responsible for the release of ribosomes from messenger RNA at the termination of protein biosynthesis. May increase the efficiency of translation by recycling ribosomes from one round of translation to another. The polypeptide is Ribosome-recycling factor (Wolbachia pipientis wMel).